The following is a 64-amino-acid chain: Large ribosomal subunit protein uL29 (64 aa).

Belongs to the universal ribosomal protein uL29 family.

The protein is Large ribosomal subunit protein uL29 of Burkholderia mallei (strain NCTC 10247).